The primary structure comprises 449 residues: Glutamyl-tRNA reductase (449 aa).

Substrate is bound by residues 58–61 (TCNR), S121, 126–128 (ETQ), and Q132. C59 serves as the catalytic Nucleophile. NADP(+) is bound at residue 203–208 (GLGEMA).

The protein belongs to the glutamyl-tRNA reductase family. As to quaternary structure, homodimer.

The catalysed reaction is (S)-4-amino-5-oxopentanoate + tRNA(Glu) + NADP(+) = L-glutamyl-tRNA(Glu) + NADPH + H(+). Its pathway is porphyrin-containing compound metabolism; protoporphyrin-IX biosynthesis; 5-aminolevulinate from L-glutamyl-tRNA(Glu): step 1/2. Its function is as follows. Catalyzes the NADPH-dependent reduction of glutamyl-tRNA(Glu) to glutamate 1-semialdehyde (GSA). The polypeptide is Glutamyl-tRNA reductase (Helicobacter pylori (strain ATCC 700392 / 26695) (Campylobacter pylori)).